We begin with the raw amino-acid sequence, 235 residues long: Transcriptional regulatory protein CseB (235 aa).

The region spanning 6-119 (HVLFVEDDDV…VLVARIRAVL (114 aa)) is the Response regulatory domain. Aspartate 55 carries the post-translational modification 4-aspartylphosphate. Residues 141–235 (GGVLTFGELE…VRGFGYKLKA (95 aa)) constitute a DNA-binding region (ompR/PhoB-type).

Post-translationally, phosphorylated by CseC.

Its subcellular location is the cytoplasm. Functionally, member of the two-component regulatory system CseB/CseC involved in the stability of the cell envelope. CseB activates transcription of RNA polymerase sigma-E factor, in response to changes in the cell envelope. The protein is Transcriptional regulatory protein CseB (cseB) of Streptomyces avermitilis (strain ATCC 31267 / DSM 46492 / JCM 5070 / NBRC 14893 / NCIMB 12804 / NRRL 8165 / MA-4680).